Consider the following 389-residue polypeptide: MSRVFKKTCSNGKLSIYLGKRDFVDHVDMVEPIDGVVLVDPEYLKGRKMFVMLTCAFRYGHDDLDVIGLTFRKDLYVQVQQVVPAESSSPRGSLTVLQERLLHKLGDNAYPFTLQMVVNLPCSVTLQPGPDDTGKACGVDFEVKSFCAENLEEKVSKRDSVRLVIRKIQFAPLEPGPGPWARLCRRFLLSAQPLLLQAWMDKEVNYHGQPISVNVSINNSTNKVIKKIKISVDQITDVVLYSLDKYTKTVFVQEFTETIAANSTFSKSFAVTPLLADNCHKQGLALDGKLKQGDTNLASSTILRPGVDKELLGILVSYKVRVNLMVSCEGILGDLTASEVGVELPLILMHPKPSNEAASSEDIVIEEFAQQEPSGESQEALAAEGNEGS.

The disordered stretch occupies residues 369–389 (AQQEPSGESQEALAAEGNEGS).

This sequence belongs to the arrestin family. In terms of assembly, homodimer; disulfide-linked in response to retinal illumination. Interacts with CXCR4; the interaction is dependent on the C-terminal phosphorylation of CXCR4 and modulates the calcium ion mobilization activity of CXCR4. Interacts with GPR84. Expressed in cone photoreceptors in the retina (at protein level).

It is found in the photoreceptor inner segment. The protein localises to the cell projection. The protein resides in the cilium. Its subcellular location is the photoreceptor outer segment. Functionally, may play a role in an as yet undefined retina-specific signal transduction. Could bind to photoactivated-phosphorylated red/green opsins. The sequence is that of Arrestin-C (ARR3) from Bos taurus (Bovine).